The primary structure comprises 316 residues: Olfactory receptor 2AG1 (316 aa).

Residues 1–25 (MELWNFTLGSGFILVGILNDSGSPE) are Extracellular-facing. 2 N-linked (GlcNAc...) asparagine glycosylation sites follow: asparagine 5 and asparagine 19. A helical membrane pass occupies residues 26–49 (LLCATITILYLLALISNGLLLLAI). At 50–57 (TMEARLHM) the chain is on the cytoplasmic side. The helical transmembrane segment at 58–79 (PMYLLLGQLSLMDLLFTSVVTP) threads the bilayer. Residues 80–100 (KALADFLRRENTISFGGCALQ) lie on the Extracellular side of the membrane. Cysteine 97 and cysteine 189 form a disulfide bridge. A helical membrane pass occupies residues 101–120 (MFLALTMGGAEDLLLAFMAY). Residues 121–139 (DRYVAICHPLTYMTLMSSR) are Cytoplasmic-facing. The chain crosses the membrane as a helical span at residues 140–158 (ACWLMVATSWILASLSALI). At 159 to 195 (YTVYTMHYPFCRAQEIRHLLCEIPHLLKVACADTSRY) the chain is on the extracellular side. Residues 196–219 (ELMVYVMGVTFLIPSLAAILASYT) traverse the membrane as a helical segment. The Cytoplasmic segment spans residues 220-236 (QILLTVLHMPSNEGRKK). The helical transmembrane segment at 237–259 (ALVTCSSHLTVVGMFYGAATFMY) threads the bilayer. The Extracellular portion of the chain corresponds to 260–272 (VLPSSFHSTRQDN). The chain crosses the membrane as a helical span at residues 273–292 (IISVFYTIVTPALNPLIYSL). At 293-316 (RNKEVMRALRRVLGKYMLPAHSTL) the chain is on the cytoplasmic side.

It belongs to the G-protein coupled receptor 1 family.

The protein resides in the cell membrane. In terms of biological role, odorant receptor. This is Olfactory receptor 2AG1 (OR2AG1) from Homo sapiens (Human).